Reading from the N-terminus, the 446-residue chain is tRNA-2-methylthio-N(6)-dimethylallyladenosine synthase (446 aa).

Residues 8–124 (KTYRVKSFGC…LPGMIDAAVA (117 aa)) form the MTTase N-terminal domain. Residues Cys17, Cys53, Cys87, Cys160, Cys164, and Cys167 each contribute to the [4Fe-4S] cluster site. One can recognise a Radical SAM core domain in the interval 146-378 (RKSAPSAFLT…QAALNRDQAA (233 aa)). The TRAM domain occupies 381-442 (AGSVGRTCEV…PNSLAGQLLE (62 aa)).

Belongs to the methylthiotransferase family. MiaB subfamily. As to quaternary structure, monomer. [4Fe-4S] cluster is required as a cofactor.

Its subcellular location is the cytoplasm. It catalyses the reaction N(6)-dimethylallyladenosine(37) in tRNA + (sulfur carrier)-SH + AH2 + 2 S-adenosyl-L-methionine = 2-methylsulfanyl-N(6)-dimethylallyladenosine(37) in tRNA + (sulfur carrier)-H + 5'-deoxyadenosine + L-methionine + A + S-adenosyl-L-homocysteine + 2 H(+). Functionally, catalyzes the methylthiolation of N6-(dimethylallyl)adenosine (i(6)A), leading to the formation of 2-methylthio-N6-(dimethylallyl)adenosine (ms(2)i(6)A) at position 37 in tRNAs that read codons beginning with uridine. This is tRNA-2-methylthio-N(6)-dimethylallyladenosine synthase from Erythrobacter litoralis (strain HTCC2594).